Consider the following 55-residue polypeptide: Spermatid nuclear transition protein 1 (55 aa).

The span at 1 to 42 shows a compositional bias: basic residues; that stretch reads MSTSRKLKSQGTRRGKNRTPHKGVKRGCSKRKYRKSSLKSRK. The interval 1-55 is disordered; the sequence is MSTSRKLKSQGTRRGKNRTPHKGVKRGCSKRKYRKSSLKSRKRCDDANRNFRSHL. Ser9, Ser36, Ser37, and Ser40 each carry phosphoserine.

This sequence belongs to the nuclear transition protein 1 family. As to expression, testis.

Its subcellular location is the nucleus. It localises to the chromosome. Its function is as follows. Plays a key role in the replacement of histones to protamine in the elongating spermatids of mammals. In condensing spermatids, loaded onto the nucleosomes, where it promotes the recruitment and processing of protamines, which are responsible for histone eviction. The polypeptide is Spermatid nuclear transition protein 1 (TNP1) (Ovis aries (Sheep)).